Consider the following 494-residue polypeptide: ATP synthase subunit alpha 1 (494 aa).

The protein belongs to the ATPase alpha/beta chains family. F-type ATPases have 2 components, CF(1) - the catalytic core - and CF(0) - the membrane proton channel. CF(1) has five subunits: alpha(3), beta(3), gamma(1), delta(1), epsilon(1). CF(0) has three main subunits: a(1), b(2) and c(9-12). The alpha and beta chains form an alternating ring which encloses part of the gamma chain. CF(1) is attached to CF(0) by a central stalk formed by the gamma and epsilon chains, while a peripheral stalk is formed by the delta and b chains.

It is found in the cell inner membrane. The catalysed reaction is ATP + H2O + 4 H(+)(in) = ADP + phosphate + 5 H(+)(out). Functionally, produces ATP from ADP in the presence of a proton gradient across the membrane. The alpha chain is a regulatory subunit. This Hahella chejuensis (strain KCTC 2396) protein is ATP synthase subunit alpha 1.